A 171-amino-acid chain; its full sequence is Probable deoxyuridine 5'-triphosphate nucleotidohydrolase (171 aa).

It belongs to the dCTP deaminase family. Archaeal dUTPase subfamily.

It carries out the reaction dUTP + H2O = dUMP + diphosphate + H(+). The protein operates within pyrimidine metabolism; dUMP biosynthesis; dUMP from dCTP (dUTP route): step 2/2. Its function is as follows. This enzyme is involved in nucleotide metabolism: it produces dUMP, the immediate precursor of thymidine nucleotides and it decreases the intracellular concentration of dUTP so that uracil cannot be incorporated into DNA. This is Probable deoxyuridine 5'-triphosphate nucleotidohydrolase from Methanosarcina acetivorans (strain ATCC 35395 / DSM 2834 / JCM 12185 / C2A).